A 459-amino-acid polypeptide reads, in one-letter code: Exodeoxyribonuclease 7 large subunit (459 aa).

This sequence belongs to the XseA family. Heterooligomer composed of large and small subunits.

The protein localises to the cytoplasm. The enzyme catalyses Exonucleolytic cleavage in either 5'- to 3'- or 3'- to 5'-direction to yield nucleoside 5'-phosphates.. Functionally, bidirectionally degrades single-stranded DNA into large acid-insoluble oligonucleotides, which are then degraded further into small acid-soluble oligonucleotides. This chain is Exodeoxyribonuclease 7 large subunit, found in Pseudomonas putida (strain ATCC 47054 / DSM 6125 / CFBP 8728 / NCIMB 11950 / KT2440).